We begin with the raw amino-acid sequence, 116 residues long: Chorion protein S15 (116 aa).

Residues 1-18 (MKFLIAFAVLALVACINA) form the signal peptide.

It belongs to the chorion protein S15/S18 family.

It is found in the secreted. Functionally, chorion membrane (egg shell) protein; plays a role in protecting the egg from the environment. This Drosophila virilis (Fruit fly) protein is Chorion protein S15 (Cp15).